Consider the following 540-residue polypeptide: Glucose-6-phosphate isomerase (540 aa).

Residue Glu-346 is the Proton donor of the active site. Residues His-377 and Lys-505 contribute to the active site.

The protein belongs to the GPI family.

The protein localises to the cytoplasm. It catalyses the reaction alpha-D-glucose 6-phosphate = beta-D-fructose 6-phosphate. It participates in carbohydrate biosynthesis; gluconeogenesis. It functions in the pathway carbohydrate degradation; glycolysis; D-glyceraldehyde 3-phosphate and glycerone phosphate from D-glucose: step 2/4. In terms of biological role, catalyzes the reversible isomerization of glucose-6-phosphate to fructose-6-phosphate. This is Glucose-6-phosphate isomerase from Francisella tularensis subsp. tularensis (strain WY96-3418).